Reading from the N-terminus, the 367-residue chain is Carbamoyl phosphate synthase small chain (367 aa).

The segment at 1 to 182 (MKLENKKGYL…PIFHPNTGDM (182 aa)) is CPSase. Ser50, Gly230, and Gly232 together coordinate L-glutamine. A Glutamine amidotransferase type-1 domain is found at 182 to 367 (MIVVVDCGIK…DKFRTMVTGK (186 aa)). The Nucleophile role is filled by Cys258. 5 residues coordinate L-glutamine: Leu259, Gln262, Asn300, Gly302, and Tyr303. Residues His343 and Glu345 contribute to the active site.

Belongs to the CarA family. Composed of two chains; the small (or glutamine) chain promotes the hydrolysis of glutamine to ammonia, which is used by the large (or ammonia) chain to synthesize carbamoyl phosphate. Tetramer of heterodimers (alpha,beta)4.

It carries out the reaction hydrogencarbonate + L-glutamine + 2 ATP + H2O = carbamoyl phosphate + L-glutamate + 2 ADP + phosphate + 2 H(+). The enzyme catalyses L-glutamine + H2O = L-glutamate + NH4(+). The protein operates within amino-acid biosynthesis; L-arginine biosynthesis; carbamoyl phosphate from bicarbonate: step 1/1. It participates in pyrimidine metabolism; UMP biosynthesis via de novo pathway; (S)-dihydroorotate from bicarbonate: step 1/3. Its function is as follows. Small subunit of the glutamine-dependent carbamoyl phosphate synthetase (CPSase). CPSase catalyzes the formation of carbamoyl phosphate from the ammonia moiety of glutamine, carbonate, and phosphate donated by ATP, constituting the first step of 2 biosynthetic pathways, one leading to arginine and/or urea and the other to pyrimidine nucleotides. The small subunit (glutamine amidotransferase) binds and cleaves glutamine to supply the large subunit with the substrate ammonia. This chain is Carbamoyl phosphate synthase small chain, found in Saccharolobus solfataricus (strain ATCC 35092 / DSM 1617 / JCM 11322 / P2) (Sulfolobus solfataricus).